A 470-amino-acid chain; its full sequence is Cell division protein FtsP (470 aa).

A signal peptide (tat-type signal) is located at residues 1–27 (MSLSRRQFIQASGIALCAGAVPLKASA). Positions 229 to 287 (VRLRLLNASNSRRYQLQMSDGRPLHVISGDQGFLPAPVSVKQLSLAPGERREILVDMSN) constitute a Plastocyanin-like domain.

The protein belongs to the FtsP family. Post-translationally, predicted to be exported by the Tat system. The position of the signal peptide cleavage has not been experimentally proven.

Its subcellular location is the periplasm. Its function is as follows. Cell division protein that is required for growth during stress conditions. May be involved in protecting or stabilizing the divisomal assembly under conditions of stress. The polypeptide is Cell division protein FtsP (Shigella dysenteriae serotype 1 (strain Sd197)).